The chain runs to 374 residues: Alcohol dehydrogenase 1 (374 aa).

Ser1 is subject to N-acetylserine. Residues Cys46, His67, Cys97, Cys100, Cys103, Cys111, and Cys174 each contribute to the Zn(2+) site. NAD(+)-binding positions include 199–204, Asp223, Lys228, 292–294, and Arg369; these read GLGGVG and VGV.

The protein belongs to the zinc-containing alcohol dehydrogenase family. Class-I subfamily. Zn(2+) serves as cofactor.

Its subcellular location is the cytoplasm. The enzyme catalyses a primary alcohol + NAD(+) = an aldehyde + NADH + H(+). The catalysed reaction is a secondary alcohol + NAD(+) = a ketone + NADH + H(+). This Alligator mississippiensis (American alligator) protein is Alcohol dehydrogenase 1.